The chain runs to 81 residues: Sulfur carrier protein TusA (81 aa).

The Cysteine persulfide intermediate role is filled by C19.

This sequence belongs to the sulfur carrier protein TusA family.

It localises to the cytoplasm. Sulfur carrier protein which probably makes part of a sulfur-relay system. In Shewanella denitrificans (strain OS217 / ATCC BAA-1090 / DSM 15013), this protein is Sulfur carrier protein TusA.